A 317-amino-acid chain; its full sequence is Protein translocase subunit SecF (317 aa).

A run of 6 helical transmembrane segments spans residues 11-31, 135-155, 166-186, 197-217, 244-266, and 276-298; these read FYLL…LFGL, RSIV…AFAF, ICAI…FAIL, LFVT…IVVF, LVRS…FFGG, and LLIG…LVSW.

This sequence belongs to the SecD/SecF family. SecF subfamily. Forms a complex with SecD. Part of the essential Sec protein translocation apparatus which comprises SecA, SecYEG and auxiliary proteins SecDF. Other proteins may also be involved.

It localises to the cell membrane. Functionally, part of the Sec protein translocase complex. Interacts with the SecYEG preprotein conducting channel. SecDF uses the proton motive force (PMF) to complete protein translocation after the ATP-dependent function of SecA. The polypeptide is Protein translocase subunit SecF (Thermobaculum terrenum (strain ATCC BAA-798 / CCMEE 7001 / YNP1)).